A 161-amino-acid chain; its full sequence is 2-C-methyl-D-erythritol 2,4-cyclodiphosphate synthase (161 aa).

Positions 10 and 12 each coordinate a divalent metal cation. Residues 10–12 (DVH) and 36–37 (HS) contribute to the 4-CDP-2-C-methyl-D-erythritol 2-phosphate site. Residue H44 participates in a divalent metal cation binding. Residues 58-60 (DIG), 63-67 (FSDTD), and R144 contribute to the 4-CDP-2-C-methyl-D-erythritol 2-phosphate site.

It belongs to the IspF family. As to quaternary structure, homotrimer. A divalent metal cation is required as a cofactor.

The enzyme catalyses 4-CDP-2-C-methyl-D-erythritol 2-phosphate = 2-C-methyl-D-erythritol 2,4-cyclic diphosphate + CMP. Its pathway is isoprenoid biosynthesis; isopentenyl diphosphate biosynthesis via DXP pathway; isopentenyl diphosphate from 1-deoxy-D-xylulose 5-phosphate: step 4/6. In terms of biological role, involved in the biosynthesis of isopentenyl diphosphate (IPP) and dimethylallyl diphosphate (DMAPP), two major building blocks of isoprenoid compounds. Catalyzes the conversion of 4-diphosphocytidyl-2-C-methyl-D-erythritol 2-phosphate (CDP-ME2P) to 2-C-methyl-D-erythritol 2,4-cyclodiphosphate (ME-CPP) with a corresponding release of cytidine 5-monophosphate (CMP). The sequence is that of 2-C-methyl-D-erythritol 2,4-cyclodiphosphate synthase from Burkholderia lata (strain ATCC 17760 / DSM 23089 / LMG 22485 / NCIMB 9086 / R18194 / 383).